Reading from the N-terminus, the 324-residue chain is Glyoxylate/hydroxypyruvate reductase B (324 aa).

Residues Arg-237 and Glu-266 contribute to the active site. Residue His-285 is the Proton donor of the active site.

It belongs to the D-isomer specific 2-hydroxyacid dehydrogenase family. GhrB subfamily. In terms of assembly, homodimer.

The protein resides in the cytoplasm. It carries out the reaction glycolate + NADP(+) = glyoxylate + NADPH + H(+). The catalysed reaction is (R)-glycerate + NAD(+) = 3-hydroxypyruvate + NADH + H(+). The enzyme catalyses (R)-glycerate + NADP(+) = 3-hydroxypyruvate + NADPH + H(+). In terms of biological role, catalyzes the NADPH-dependent reduction of glyoxylate and hydroxypyruvate into glycolate and glycerate, respectively. This is Glyoxylate/hydroxypyruvate reductase B from Citrobacter koseri (strain ATCC BAA-895 / CDC 4225-83 / SGSC4696).